A 523-amino-acid chain; its full sequence is GMP synthase [glutamine-hydrolyzing] (523 aa).

The Glutamine amidotransferase type-1 domain occupies 9–198; sequence PVLVVDFGAQ…LTEIAGLEQN (190 aa). Catalysis depends on Cys-86, which acts as the Nucleophile. Residues His-172 and Glu-174 contribute to the active site. Residues 199–397 enclose the GMPS ATP-PPase domain; the sequence is WTAANIAEEL…LGLPEEIVGR (199 aa). Position 227–233 (227–233) interacts with ATP; sequence SGGVDSA.

As to quaternary structure, homodimer.

It catalyses the reaction XMP + L-glutamine + ATP + H2O = GMP + L-glutamate + AMP + diphosphate + 2 H(+). It functions in the pathway purine metabolism; GMP biosynthesis; GMP from XMP (L-Gln route): step 1/1. Functionally, catalyzes the synthesis of GMP from XMP. The protein is GMP synthase [glutamine-hydrolyzing] of Corynebacterium glutamicum (strain R).